Here is a 140-residue protein sequence, read N- to C-terminus: Prepilin peptidase-dependent protein A (140 aa).

A propeptide spanning residues 1-23 is cleaved from the precursor; it reads MLLLKASAICGKGNEGKRNKKGG. Phe24 carries the post-translational modification N-methylphenylalanine. Residues 24–44 form a helical membrane-spanning segment; it reads FTLIELTVVLAIMAIILMVIA.

The protein localises to the membrane. Functionally, not yet known. The sequence is that of Prepilin peptidase-dependent protein A (ppdA) from Clostridium perfringens (strain 13 / Type A).